Here is a 958-residue protein sequence, read N- to C-terminus: Protein translocase subunit SecA (958 aa).

ATP is bound by residues Q87, 105–109, and D524; that span reads GEGKT. The interval 598-617 is disordered; it reads RRIDNQLRGRSGRQGDPGRS. The Zn(2+) site is built by C939, C941, C950, and H951.

This sequence belongs to the SecA family. As to quaternary structure, monomer and homodimer. Part of the essential Sec protein translocation apparatus which comprises SecA, SecYEG and auxiliary proteins SecDF-YajC and YidC. Zn(2+) is required as a cofactor.

It localises to the cell inner membrane. The protein resides in the cytoplasm. It catalyses the reaction ATP + H2O + cellular proteinSide 1 = ADP + phosphate + cellular proteinSide 2.. Its function is as follows. Part of the Sec protein translocase complex. Interacts with the SecYEG preprotein conducting channel. Has a central role in coupling the hydrolysis of ATP to the transfer of proteins into and across the cell membrane, serving both as a receptor for the preprotein-SecB complex and as an ATP-driven molecular motor driving the stepwise translocation of polypeptide chains across the membrane. The protein is Protein translocase subunit SecA of Methylobacterium sp. (strain 4-46).